A 275-amino-acid chain; its full sequence is 4-hydroxy-tetrahydrodipicolinate reductase (275 aa).

NAD(+) is bound by residues 13 to 18 (GAAGKM), 108 to 110 (GTT), and 134 to 137 (VPNF). His164 functions as the Proton donor/acceptor in the catalytic mechanism. His165 contacts (S)-2,3,4,5-tetrahydrodipicolinate. Lys168 (proton donor) is an active-site residue. 174 to 175 (GT) contributes to the (S)-2,3,4,5-tetrahydrodipicolinate binding site.

This sequence belongs to the DapB family.

It localises to the cytoplasm. The enzyme catalyses (S)-2,3,4,5-tetrahydrodipicolinate + NAD(+) + H2O = (2S,4S)-4-hydroxy-2,3,4,5-tetrahydrodipicolinate + NADH + H(+). The catalysed reaction is (S)-2,3,4,5-tetrahydrodipicolinate + NADP(+) + H2O = (2S,4S)-4-hydroxy-2,3,4,5-tetrahydrodipicolinate + NADPH + H(+). It functions in the pathway amino-acid biosynthesis; L-lysine biosynthesis via DAP pathway; (S)-tetrahydrodipicolinate from L-aspartate: step 4/4. Functionally, catalyzes the conversion of 4-hydroxy-tetrahydrodipicolinate (HTPA) to tetrahydrodipicolinate. This Gloeothece citriformis (strain PCC 7424) (Cyanothece sp. (strain PCC 7424)) protein is 4-hydroxy-tetrahydrodipicolinate reductase.